Reading from the N-terminus, the 258-residue chain is Mediator of RNA polymerase II transcription subunit 7 (258 aa).

2 disordered regions span residues 1–39 (MLPGFGATQTVSPFPNPPEYASAYTSDRIDNGSAPPPPH) and 202–243 (EKET…PPSV). A compositionally biased stretch (acidic residues) spans 203–217 (KETEEDEEMKEDDEE). The segment covering 220–229 (STSSSEGNQK) has biased composition (polar residues).

Belongs to the Mediator complex subunit 7 family. In terms of assembly, component of the Mediator complex.

It localises to the nucleus. Component of the Mediator complex, a coactivator involved in the regulated transcription of nearly all RNA polymerase II-dependent genes. Mediator functions as a bridge to convey information from gene-specific regulatory proteins to the basal RNA polymerase II transcription machinery. Mediator is recruited to promoters by direct interactions with regulatory proteins and serves as a scaffold for the assembly of a functional preinitiation complex with RNA polymerase II and the general transcription factors. This Caenorhabditis briggsae protein is Mediator of RNA polymerase II transcription subunit 7 (let-49).